The primary structure comprises 403 residues: Argininosuccinate synthase 1 (403 aa).

ATP contacts are provided by residues 10 to 18 and Ala-37; that span reads SYSGGLDTS. Tyr-88 and Ser-93 together coordinate L-citrulline. Residue Gly-118 participates in ATP binding. Residues Thr-120, Asn-124, and Asp-125 each contribute to the L-aspartate site. Asn-124 contacts L-citrulline. L-citrulline-binding residues include Arg-128, Ser-179, Ser-188, Glu-264, and Tyr-276.

Belongs to the argininosuccinate synthase family. Type 1 subfamily. As to quaternary structure, homotetramer.

It localises to the cytoplasm. It carries out the reaction L-citrulline + L-aspartate + ATP = 2-(N(omega)-L-arginino)succinate + AMP + diphosphate + H(+). Its pathway is amino-acid biosynthesis; L-arginine biosynthesis; L-arginine from L-ornithine and carbamoyl phosphate: step 2/3. This chain is Argininosuccinate synthase 1, found in Rhizobium johnstonii (strain DSM 114642 / LMG 32736 / 3841) (Rhizobium leguminosarum bv. viciae).